The primary structure comprises 164 residues: C-phycoerythrin class 1 subunit alpha (164 aa).

Cys82 and Cys139 together coordinate (2R,3E)-phycoerythrobilin.

This sequence belongs to the phycobiliprotein family. Heterodimer of an alpha and a beta chain. In terms of processing, contains one covalently linked bilin chromophore.

The protein localises to the cellular thylakoid membrane. In terms of biological role, light-harvesting photosynthetic bile pigment-protein from the phycobiliprotein complex. In Synechococcus sp. (strain WH7803), this protein is C-phycoerythrin class 1 subunit alpha (cpeA).